A 513-amino-acid chain; its full sequence is Teichoic acid ribitol-phosphate polymerase TarK (513 aa).

The protein belongs to the CDP-glycerol glycerophosphotransferase family.

The protein localises to the cell membrane. The catalysed reaction is 4-O-[di(2R)-glycerylphospho]-N-acetyl-beta-D-mannosaminyl-(1-&gt;4)-N-acetyl-alpha-D-glucosaminyl di-trans,octa-cis-undecaprenyl diphosphate + n CDP-L-ribitol = 4-O-[(D-ribitylphospho)(n)-di{(2R)-glycerylphospho}]-N-acetyl-beta-D-mannosaminyl-(1-&gt;4)-N-acetyl-alpha-D-glucosaminyl di-trans,octa-cis-undecaprenyl diphosphate + n CMP + n H(+). The protein operates within cell wall biogenesis; poly(ribitol phosphate) teichoic acid biosynthesis. Its function is as follows. Can catalyze the polymerization of the main chain of the major teichoic acid by sequential transfer of ribitol phosphate units from CDP-ribitol to the second glycerol phosphate attached to the disaccharide linkage unit. In Staphylococcus aureus (strain NCTC 8325 / PS 47), this protein is Teichoic acid ribitol-phosphate polymerase TarK (tarK).